Here is a 139-residue protein sequence, read N- to C-terminus: Mitochondrial intermembrane space import and assembly protein 40-A (139 aa).

3 cysteine pairs are disulfide-bonded: C53–C55, C64–C97, and C74–C87. In terms of domain architecture, CHCH spans 61–105 (SGPCGEQFKSAFSCFHYSQEEIKGSDCLDQFRGMQECMQKYPDLY). 2 consecutive short sequence motifs (cx9C motif) follow at residues 64-74 (CGEQFKSAFSC) and 87-97 (CLDQFRGMQEC). The disordered stretch occupies residues 103-139 (DLYPQEDDEEEAEKEKQNKEAEPSVTQSSDTKEESSS). Residues 115–124 (EKEKQNKEAE) are compositionally biased toward basic and acidic residues.

As to quaternary structure, monomer. Can form homooligomers.

It is found in the mitochondrion intermembrane space. Its function is as follows. Central component of a redox-sensitive mitochondrial intermembrane space import machinery which is required for the biogenesis of respiratory chain complexes. Functions as chaperone and catalyzes the formation of disulfide bonds in substrate proteins, such as COX17 or MICU1. Required for the import and folding of small cysteine-containing proteins (small Tim) in the mitochondrial intermembrane space (IMS). Precursor proteins to be imported into the IMS are translocated in their reduced form into the mitochondria. The chain is Mitochondrial intermembrane space import and assembly protein 40-A (chchd4-a) from Xenopus laevis (African clawed frog).